Here is a 190-residue protein sequence, read N- to C-terminus: Holliday junction branch migration complex subunit RuvA (190 aa).

A domain I region spans residues 1–64; that stretch reads MIGSLTGIIE…DNLTQLYGFL (64 aa). Residues 65 to 142 are domain II; it reads DKQEQDYMRM…KMPIEETLII (78 aa). A region of interest (flexible linker) is located at residue Lys143. Positions 143 to 190 are domain III; the sequence is KEDDSLAALISLGYDKLKAFNAIQEIKSDFPNANIQEIIRKALQKLSQ.

The protein belongs to the RuvA family. As to quaternary structure, homotetramer. Forms an RuvA(8)-RuvB(12)-Holliday junction (HJ) complex. HJ DNA is sandwiched between 2 RuvA tetramers; dsDNA enters through RuvA and exits via RuvB. An RuvB hexamer assembles on each DNA strand where it exits the tetramer. Each RuvB hexamer is contacted by two RuvA subunits (via domain III) on 2 adjacent RuvB subunits; this complex drives branch migration. In the full resolvosome a probable DNA-RuvA(4)-RuvB(12)-RuvC(2) complex forms which resolves the HJ.

Its subcellular location is the cytoplasm. Functionally, the RuvA-RuvB-RuvC complex processes Holliday junction (HJ) DNA during genetic recombination and DNA repair, while the RuvA-RuvB complex plays an important role in the rescue of blocked DNA replication forks via replication fork reversal (RFR). RuvA specifically binds to HJ cruciform DNA, conferring on it an open structure. The RuvB hexamer acts as an ATP-dependent pump, pulling dsDNA into and through the RuvAB complex. HJ branch migration allows RuvC to scan DNA until it finds its consensus sequence, where it cleaves and resolves the cruciform DNA. This Ehrlichia canis (strain Jake) protein is Holliday junction branch migration complex subunit RuvA.